Reading from the N-terminus, the 183-residue chain is MTTKSKTLEIDNNTFLLLEGNLKRIFATPIGYTTFREFQNVIFNCAQGQQELANFLFEMLINGKLLQELPAGQKQSAQSLIVQFMMLIRVAKDIHERGEFINFITSDMLAQQERCVFLNRLSRVDGQEFLLMTDVQNTCHLIRHLLSRLLEAQKNPIGEKNLQEVQEDLDSLRAHFEELTKSM.

The protein belongs to the chlamydial CPn_0803/CT_584/TC_0873 family.

This is an uncharacterized protein from Chlamydia muridarum (strain MoPn / Nigg).